We begin with the raw amino-acid sequence, 218 residues long: UPF0329 protein ECU10_1860 (218 aa).

This sequence belongs to the UPF0329 family.

The polypeptide is UPF0329 protein ECU10_1860 (Encephalitozoon cuniculi (strain GB-M1) (Microsporidian parasite)).